We begin with the raw amino-acid sequence, 557 residues long: Copine-4 (557 aa).

2 C2 domains span residues 3–131 and 137–264; these read KMSN…SKSL and TAGK…VQWE. The Ca(2+) site is built by Asp170, Asp176, Asp232, Asp234, and Asp240. Positions 305-507 constitute a VWFA domain; that stretch reads QIQFTVAIDF…VLRDIVQFVP (203 aa).

It belongs to the copine family. In terms of assembly, interacts (via VWFA domain) with ACTB, BCOR, BICD2, CCDC22, CDC42BPB, CEP162, MYCBP2, NONO, PDCD6, PITPNM2, RDX, SKIL, SKT, SPTBN1, UBE2O and WTAP. Ca(2+) serves as cofactor.

Probable calcium-dependent phospholipid-binding protein that may play a role in calcium-mediated intracellular processes. This chain is Copine-4, found in Mus musculus (Mouse).